We begin with the raw amino-acid sequence, 361 residues long: Spermidine/putrescine import ATP-binding protein PotA (361 aa).

In terms of domain architecture, ABC transporter spans 7–241 (IEVRNVSKRY…PQHRFVAQFI (235 aa)). Residue 43-50 (GPSGCGKT) participates in ATP binding.

This sequence belongs to the ABC transporter superfamily. Spermidine/putrescine importer (TC 3.A.1.11.1) family. The complex is composed of two ATP-binding proteins (PotA), two transmembrane proteins (PotB and PotC) and a solute-binding protein (PotD).

It is found in the cell inner membrane. The enzyme catalyses ATP + H2O + polyamine-[polyamine-binding protein]Side 1 = ADP + phosphate + polyamineSide 2 + [polyamine-binding protein]Side 1.. Functionally, part of the ABC transporter complex PotABCD involved in spermidine/putrescine import. Responsible for energy coupling to the transport system. This Pseudomonas fluorescens (strain Pf0-1) protein is Spermidine/putrescine import ATP-binding protein PotA.